Reading from the N-terminus, the 130-residue chain is Small ribosomal subunit protein uS8 (130 aa).

It belongs to the universal ribosomal protein uS8 family. In terms of assembly, part of the 30S ribosomal subunit. Contacts proteins S5 and S12.

Functionally, one of the primary rRNA binding proteins, it binds directly to 16S rRNA central domain where it helps coordinate assembly of the platform of the 30S subunit. The polypeptide is Small ribosomal subunit protein uS8 (Photorhabdus laumondii subsp. laumondii (strain DSM 15139 / CIP 105565 / TT01) (Photorhabdus luminescens subsp. laumondii)).